Consider the following 236-residue polypeptide: Chaperone protein TorD (236 aa).

This sequence belongs to the TorD/DmsD family. TorD subfamily.

The protein localises to the cytoplasm. In terms of biological role, involved in the biogenesis of TorA. Acts on TorA before the insertion of the molybdenum cofactor and, as a result, probably favors a conformation of the apoenzyme that is competent for acquiring the cofactor. The chain is Chaperone protein TorD from Colwellia psychrerythraea (strain 34H / ATCC BAA-681) (Vibrio psychroerythus).